The primary structure comprises 396 residues: uncharacterized protein (396 aa).

It belongs to the NAD(P)-dependent epimerase/dehydratase family. NAD(+) serves as cofactor. Requires NADP(+) as cofactor.

Its function is as follows. Putative nucleotide sugar epimerase/dehydrogenase. This is an uncharacterized protein from Sinorhizobium fredii (strain NBRC 101917 / NGR234).